The primary structure comprises 504 residues: Cytochrome P450 4A2 (504 aa).

Positions 1–4 are excised as a propeptide; that stretch reads MGFS. Glu-315 contributes to the heme binding site. Ser-434 bears the Phosphoserine mark. Cys-451 is a heme binding site.

The protein belongs to the cytochrome P450 family. Requires heme as cofactor.

The protein resides in the endoplasmic reticulum membrane. Its subcellular location is the microsome membrane. The catalysed reaction is an omega-methyl-long-chain fatty acid + reduced [NADPH--hemoprotein reductase] + O2 = an omega-hydroxy-long-chain fatty acid + oxidized [NADPH--hemoprotein reductase] + H2O + H(+). It catalyses the reaction dodecanoate + reduced [NADPH--hemoprotein reductase] + O2 = (11R)-hydroxydodecanoate + oxidized [NADPH--hemoprotein reductase] + H2O + H(+). The enzyme catalyses dodecanoate + reduced [NADPH--hemoprotein reductase] + O2 = 12-hydroxydodecanoate + oxidized [NADPH--hemoprotein reductase] + H2O + H(+). It carries out the reaction tetradecanoate + reduced [NADPH--hemoprotein reductase] + O2 = 14-hydroxytetradecanoate + oxidized [NADPH--hemoprotein reductase] + H2O + H(+). The catalysed reaction is hexadecanoate + reduced [NADPH--hemoprotein reductase] + O2 = 16-hydroxyhexadecanoate + oxidized [NADPH--hemoprotein reductase] + H2O + H(+). It functions in the pathway lipid metabolism; fatty acid metabolism. Its function is as follows. A cytochrome P450 monooxygenase that catalyzes omega and omega-1 hydroxylation of saturated fatty acids. Exhibits preferential omega versus omega-1 regioselectivity and (R) versus (S) stereoselectivity for hydroxylation of lauric and myristic acids. Has low activity toward palmitic acid. Mechanistically, uses molecular oxygen inserting one oxygen atom into a substrate, and reducing the second into a water molecule, with two electrons provided by NADPH via cytochrome P450 reductase (CPR; NADPH-ferrihemoprotein reductase). The sequence is that of Cytochrome P450 4A2 from Rattus norvegicus (Rat).